Consider the following 185-residue polypeptide: Elongation factor P (185 aa).

Belongs to the elongation factor P family.

It is found in the cytoplasm. It participates in protein biosynthesis; polypeptide chain elongation. Functionally, involved in peptide bond synthesis. Stimulates efficient translation and peptide-bond synthesis on native or reconstituted 70S ribosomes in vitro. Probably functions indirectly by altering the affinity of the ribosome for aminoacyl-tRNA, thus increasing their reactivity as acceptors for peptidyl transferase. The protein is Elongation factor P of Oleidesulfovibrio alaskensis (strain ATCC BAA-1058 / DSM 17464 / G20) (Desulfovibrio alaskensis).